Consider the following 74-residue polypeptide: Translational regulator CsrA (74 aa).

This sequence belongs to the CsrA/RsmA family. In terms of assembly, homodimer; the beta-strands of each monomer intercalate to form a hydrophobic core, while the alpha-helices form wings that extend away from the core.

It localises to the cytoplasm. Functionally, a translational regulator that binds mRNA to regulate translation initiation and/or mRNA stability. Usually binds in the 5'-UTR at or near the Shine-Dalgarno sequence preventing ribosome-binding, thus repressing translation. Its main target seems to be the major flagellin gene, while its function is anatagonized by FliW. In Oceanobacillus iheyensis (strain DSM 14371 / CIP 107618 / JCM 11309 / KCTC 3954 / HTE831), this protein is Translational regulator CsrA.